The chain runs to 544 residues: Dynein intermediate chain 1 (544 aa).

WD repeat units lie at residues 241-281 (KARS…YPVS), 289-330 (GHLE…RPSE), 342-387 (SQCI…QPSN), 402-441 (VMTS…NQHE), 461-501 (THKA…EAPV), and 506-544 (PDGK…NLAN).

This sequence belongs to the dynein intermediate chain family.

Its subcellular location is the cytoplasm. In terms of biological role, has a role in meiotic nuclear divsion where it promotes the movement of 'horsetails'. This chain is Dynein intermediate chain 1 (dic1), found in Schizosaccharomyces pombe (strain 972 / ATCC 24843) (Fission yeast).